Here is a 499-residue protein sequence, read N- to C-terminus: U4/U6 small nuclear ribonucleoprotein Prp31 (499 aa).

A disordered region spans residues 1–43 (MSLADELLADLEEAAEEEEGGSYGEEEEEPAIEDVQEETQLDL). Over residues 7–40 (LLADLEEAAEEEEGGSYGEEEEEPAIEDVQEETQ) the composition is skewed to acidic residues. 2 coiled-coil regions span residues 85-120 (EAAP…KYSK) and 181-215 (DEEL…MSFI). Residues 215–333 (IAPNLSIIIG…IERKFDKWQE (119 aa)) form the Nop domain. The disordered stretch occupies residues 334–357 (PPPVKQVKPLPAPLDGQRKKRGGR). A Nuclear localization signal (NLS) motif is present at residues 351–364 (RKKRGGRRYRKMKE). 3 positions are modified to phosphoserine: Ser-379, Ser-395, and Ser-432. Position 438 is an N6-acetyllysine (Lys-438). Ser-439 carries the phosphoserine modification. The residue at position 440 (Thr-440) is a Phosphothreonine. Ser-450 bears the Phosphoserine mark. Thr-455 carries the post-translational modification Phosphothreonine. Residues Lys-471 and Lys-478 each participate in a glycyl lysine isopeptide (Lys-Gly) (interchain with G-Cter in SUMO2) cross-link.

Belongs to the PRP31 family. In terms of assembly, identified in the spliceosome B complex. Component of the U4/U6-U5 tri-snRNP complex composed of the U4, U6 and U5 snRNAs and at least PRPF3, PRPF4, PRPF6, PRPF8, PRPF31, SNRNP200, TXNL4A, SNRNP40, DDX23, CD2BP2, PPIH, SNU13, EFTUD2, SART1 and USP39. Interacts with a complex formed by SNU13 and U4 snRNA, but not with SNU13 or U4 snRNA alone. The complex formed by SNU13 and PRPF31 also binds U4atac snRNA, a characteristic component of specific, less abundant spliceosomal complexes. Interacts with PRPF6/U5 snRNP-associated 102 kDa protein. Component of some MLL1/MLL complex, at least composed of the core components KMT2A/MLL1, ASH2L, HCFC1/HCF1, WDR5 and RBBP5, as well as the facultative components BACC1, CHD8, E2F6, HSP70, INO80C, KANSL1, LAS1L, MAX, MCRS1, MGA, KAT8/MOF, PELP1, PHF20, PRP31, RING2, RUVB1/TIP49A, RUVB2/TIP49B, SENP3, TAF1, TAF4, TAF6, TAF7, TAF9 and TEX10. Interacts (via its NLS) with CTNNBL1. Interacts with USH1G. In terms of processing, phosphorylated by PRP4K during spliceosome assembly.

The protein localises to the nucleus. The protein resides in the nucleus speckle. It localises to the cajal body. Involved in pre-mRNA splicing as component of the spliceosome. Required for the assembly of the U4/U5/U6 tri-snRNP complex, one of the building blocks of the spliceosome. The polypeptide is U4/U6 small nuclear ribonucleoprotein Prp31 (Prpf31) (Mus musculus (Mouse)).